The sequence spans 400 residues: Argininosuccinate synthase (400 aa).

Residue 8-16 (AYSGGLDTS) participates in ATP binding. Tyr87 contributes to the L-citrulline binding site. Position 117 (Gly117) interacts with ATP. The L-aspartate site is built by Thr119, Asn123, and Asp124. Residue Asn123 coordinates L-citrulline. L-citrulline-binding residues include Arg127, Ser175, Glu260, and Tyr272.

The protein belongs to the argininosuccinate synthase family. Type 1 subfamily. In terms of assembly, homotetramer.

It localises to the cytoplasm. It catalyses the reaction L-citrulline + L-aspartate + ATP = 2-(N(omega)-L-arginino)succinate + AMP + diphosphate + H(+). Its pathway is amino-acid biosynthesis; L-arginine biosynthesis; L-arginine from L-ornithine and carbamoyl phosphate: step 2/3. In Mycobacterium sp. (strain JLS), this protein is Argininosuccinate synthase.